The following is a 251-amino-acid chain: MKILLSNDDGYKAPGIQALWHCLKELNLHSELRLIAPDRNRSAASNSLTLMEPLRITDHGDAIYSVNGTPTDCVHLGINGAMDFQPDMVVSGINAGANMGDDVLYSGTVAAATEGRFLGKPSIAISLCGDQHFETASQVMLELFKNFHELPLDSSTILNINVPDIPYESLKGIQITRLGKRHCSEKVVTTQDPRGNQIYWVGPAGQAEDASEGTDFHAVENGYASVTPLKIDLTHYEMQAVLKGWFENKAL.

4 residues coordinate a divalent metal cation: Asp8, Asp9, Ser42, and Asn94.

It belongs to the SurE nucleotidase family. Requires a divalent metal cation as cofactor.

It localises to the cytoplasm. It catalyses the reaction a ribonucleoside 5'-phosphate + H2O = a ribonucleoside + phosphate. Its function is as follows. Nucleotidase that shows phosphatase activity on nucleoside 5'-monophosphates. This is 5'-nucleotidase SurE from Hydrogenovibrio crunogenus (strain DSM 25203 / XCL-2) (Thiomicrospira crunogena).